The following is a 171-amino-acid chain: Co-chaperone protein HscB homolog (171 aa).

In terms of domain architecture, J spans 2–74; it reads NHFELFGLPS…ISRAEYILAE (73 aa).

Belongs to the HscB family. In terms of assembly, interacts with HscA and stimulates its ATPase activity.

In terms of biological role, co-chaperone involved in the maturation of iron-sulfur cluster-containing proteins. Seems to help targeting proteins to be folded toward HscA. The protein is Co-chaperone protein HscB homolog of Vibrio parahaemolyticus serotype O3:K6 (strain RIMD 2210633).